Consider the following 143-residue polypeptide: FIS1-related protein fis-1 (143 aa).

Residues 121–141 (LGLLGGAVAVVGGLVIAGLAF) form a helical membrane-spanning segment.

This sequence belongs to the FIS1 family.

It localises to the mitochondrion outer membrane. The protein localises to the peroxisome membrane. Functionally, involved in the fragmentation of the mitochondrial network. Involved in perinuclear clustering of the mitochondrial network. Plays a role in removal of ultraviolet C radiation-induced mitochondrial DNA damage. May act, redundantly with fis-2, downstream of mitochondrial fission, before the fission products participate in either mitochondrial homeostasis, mitophagy, or apoptosis. The chain is FIS1-related protein fis-1 from Caenorhabditis elegans.